The chain runs to 381 residues: Spermidine/putrescine import ATP-binding protein PotA (381 aa).

In terms of domain architecture, ABC transporter spans 22–252 (VELRNVFKFF…PKTSFVADFI (231 aa)). ATP is bound at residue 54–61 (GPSGCGKT).

This sequence belongs to the ABC transporter superfamily. Spermidine/putrescine importer (TC 3.A.1.11.1) family. The complex is composed of two ATP-binding proteins (PotA), two transmembrane proteins (PotB and PotC) and a solute-binding protein (PotD).

It is found in the cell inner membrane. The enzyme catalyses ATP + H2O + polyamine-[polyamine-binding protein]Side 1 = ADP + phosphate + polyamineSide 2 + [polyamine-binding protein]Side 1.. Its function is as follows. Part of the ABC transporter complex PotABCD involved in spermidine/putrescine import. Responsible for energy coupling to the transport system. The chain is Spermidine/putrescine import ATP-binding protein PotA from Nostoc sp. (strain PCC 7120 / SAG 25.82 / UTEX 2576).